We begin with the raw amino-acid sequence, 65 residues long: Protein translocase subunit SecE (65 aa).

A helical transmembrane segment spans residues Leu44–Ile64.

The protein belongs to the SecE/SEC61-gamma family. Component of the Sec protein translocase complex. Heterotrimer consisting of SecY (alpha), SecG (beta) and SecE (gamma) subunits. The heterotrimers can form oligomers, although 1 heterotrimer is thought to be able to translocate proteins. Interacts with the ribosome. May interact with SecDF, and other proteins may be involved.

Its subcellular location is the cell membrane. In terms of biological role, essential subunit of the Sec protein translocation channel SecYEG. Clamps together the 2 halves of SecY. May contact the channel plug during translocation. The chain is Protein translocase subunit SecE from Sulfolobus acidocaldarius (strain ATCC 33909 / DSM 639 / JCM 8929 / NBRC 15157 / NCIMB 11770).